Consider the following 116-residue polypeptide: MKLTGLLSLALLTTLALAAPDPKKNGPNRDWCGQVCTGKNDCSGECNKCVNFVCKRTSVLIYKEYLHKNATDHAARLNATRHLTIMIDETTRVDHVTVKFNVETYGMESITRRPEA.

The first 18 residues, Met-1–Ala-18, serve as a signal peptide directing secretion. Disulfide bonds link Cys-32-Cys-46, Cys-36-Cys-49, and Cys-42-Cys-54.

The protein belongs to the UPF0499 family.

Its subcellular location is the secreted. This chain is UPF0499 protein ATEG_06693, found in Aspergillus terreus (strain NIH 2624 / FGSC A1156).